Reading from the N-terminus, the 147-residue chain is ATP synthase epsilon chain 2 (147 aa).

It belongs to the ATPase epsilon chain family. As to quaternary structure, F-type ATPases have 2 components, CF(1) - the catalytic core - and CF(0) - the membrane proton channel. CF(1) has five subunits: alpha(3), beta(3), gamma(1), delta(1), epsilon(1). CF(0) has three main subunits: a, b and c.

It localises to the cell inner membrane. Its function is as follows. Produces ATP from ADP in the presence of a proton gradient across the membrane. This chain is ATP synthase epsilon chain 2, found in Photobacterium profundum (strain SS9).